The chain runs to 901 residues: Translation initiation factor IF-2 (901 aa).

Residues 48-313 (HLNREHGGSS…SSLQQGFTKP (266 aa)) are disordered. Residues 68-82 (STLSVPGTGGKSKSV) are compositionally biased toward polar residues. Residues 106–226 (ALAKREAEEQ…RMAEANEGKW (121 aa)) are compositionally biased toward basic and acidic residues. Positions 263-277 (ARGRGGKAAKQKKGS) are enriched in basic residues. A compositionally biased stretch (basic and acidic residues) spans 278 to 291 (KLSESKADREEARA). The tr-type G domain occupies 400-569 (PRAPVVTIMG…LLQAEVLELK (170 aa)). The tract at residues 409-416 (GHVDHGKT) is G1. GTP is bound at residue 409 to 416 (GHVDHGKT). The G2 stretch occupies residues 434-438 (GITQH). A G3 region spans residues 455–458 (DTPG). GTP contacts are provided by residues 455-459 (DTPGH) and 509-512 (NKID). A G4 region spans residues 509–512 (NKID). Residues 545 to 547 (SAK) are G5.

Belongs to the TRAFAC class translation factor GTPase superfamily. Classic translation factor GTPase family. IF-2 subfamily.

The protein localises to the cytoplasm. Its function is as follows. One of the essential components for the initiation of protein synthesis. Protects formylmethionyl-tRNA from spontaneous hydrolysis and promotes its binding to the 30S ribosomal subunits. Also involved in the hydrolysis of GTP during the formation of the 70S ribosomal complex. This Edwardsiella ictaluri (strain 93-146) protein is Translation initiation factor IF-2.